A 1410-amino-acid polypeptide reads, in one-letter code: non-specific serine/threonine protein kinase (1410 aa).

Residues 27-299 (THYVSQLNNS…LLEKYRTIYF (273 aa)) form the Protein kinase domain. Residues 33-41 (LNNSRFLKT) and lysine 54 contribute to the ATP site. The Proton acceptor role is filled by aspartate 147. HEAT repeat units lie at residues 441 to 478 (TKLD…EVKH), 485 to 525 (NIFV…KANL), 556 to 594 (RKLQ…YFGR), 596 to 633 (KTND…LLGP), and 635 to 672 (TMEQ…TRFV). WD repeat units lie at residues 1037–1076 (FDGT…NEKS), 1187–1226 (ADYG…QIRA), and 1230–1273 (GESL…CKHV).

The protein belongs to the protein kinase superfamily. Ser/Thr protein kinase family. As to quaternary structure, component of the autophagy-specific VPS34 PI3-kinase complex I composed of VPS15, VPS30, VPS34, ATG14 and ATG38; and of the VPS34 PI3-kinase complex II composed of VPS15, VPS30, VPS34 and VPS38. Autophosphorylated.

It localises to the golgi apparatus. It is found in the trans-Golgi network membrane. The protein resides in the endosome membrane. It catalyses the reaction L-seryl-[protein] + ATP = O-phospho-L-seryl-[protein] + ADP + H(+). The enzyme catalyses L-threonyl-[protein] + ATP = O-phospho-L-threonyl-[protein] + ADP + H(+). Its function is as follows. Serine/threonine-protein kinase that plays a role in signaling in modulation of host immune response, intracellular survival and virulence. Required for impediment of phagosomal maturation in THP-1 macrophages. Regulatory subunit of the autophagy-specific VPS34 PI3-kinase complex I essential to recruit the ATG8-phosphatidylinositol conjugate and the ATG12-ATG5 conjugate to the pre-autophagosomal structure. Within the PS34 PI3-kinase complex I, VPS15-mediated phosphorylation of VPS34 may be required for recruiting VPS34 to the membrane but not for activation of its PI3K activity. Is also involved in endosome-to-Golgi retrograde transport as part of the VPS34 PI3-kinase complex II. This second complex is required for the endosome-to-Golgi retrieval of PEP1 and KEX2, and the recruitment of VPS5 and VPS7, two components of the retromer complex, to endosomal membranes (probably through the synthesis of a specific pool of phosphatidylinositol 3-phosphate recruiting the retromer to the endosomes). By regulating VPS34 kinase activity, VPS15 appears to be essential for the efficient delivery of soluble hydrolases to the yeast vacuole. In Candida glabrata (strain ATCC 2001 / BCRC 20586 / JCM 3761 / NBRC 0622 / NRRL Y-65 / CBS 138) (Yeast), this protein is non-specific serine/threonine protein kinase.